The sequence spans 251 residues: uncharacterized protein (251 aa).

This is an uncharacterized protein from Caenorhabditis elegans.